The primary structure comprises 487 residues: N-succinylglutamate 5-semialdehyde dehydrogenase (487 aa).

Residue 221-226 (GSSDTG) participates in NAD(+) binding. Active-site residues include Glu-244 and Cys-278.

It belongs to the aldehyde dehydrogenase family. AstD subfamily.

The enzyme catalyses N-succinyl-L-glutamate 5-semialdehyde + NAD(+) + H2O = N-succinyl-L-glutamate + NADH + 2 H(+). It functions in the pathway amino-acid degradation; L-arginine degradation via AST pathway; L-glutamate and succinate from L-arginine: step 4/5. Functionally, catalyzes the NAD-dependent reduction of succinylglutamate semialdehyde into succinylglutamate. The protein is N-succinylglutamate 5-semialdehyde dehydrogenase of Burkholderia thailandensis (strain ATCC 700388 / DSM 13276 / CCUG 48851 / CIP 106301 / E264).